We begin with the raw amino-acid sequence, 886 residues long: MFKGLRKKASALSLYSQPTRAGGMANDPSSYDKILKQVHDFETAFKAMDYLLDDRTQDGIDLLQEQQKRHVKTESQQPAAIFPLALGVMEFIEATLGFEPEVMERAHQTLSEAEAASMNNVKYNVRYSLGTSHIYPPGTEFQVTNAESTLLNALLMLLQESNGVVESAKALFKLRKAYQTLDSIYKKIKESEPVFNKNLAKLKKEASLQHEGNSANVSTVDLPGYSNQSSRGGSSASLPQDVKLLKNLETVYQMRKSRIEGTSLNDPSQALNVNMYAATSSGESSVSVASAVNSDSGGRPESPRATTLSQNAKFRNPIPSSADDEFDDEDDEFSDASDTFHSFGNLSIPHSMHKSSSLANSQVLDNAESFVSGANSSSISLRNSDQEDNHMHVSTVDEYIHSGVQLCFGILQVVLSLIPPTIGKVLSIVGFRGDRETGLKMLWRTAITSRNIHGELALLCLLVFYDGPIQFIDDGYQLPGQEDANVSEVISIDKKSNISDKELEIILKNPALYTPQLLTKVRGYFPHNALWLLQEGRMLAAQGQLVKAATLMQSFTDNPETKINMQQVEALLIFDRAMLYAFKHDYDEAARDFIYLLDINSWSKSIYLFFAGSCYLEKWRMIKLGMIEVEDREKSLKYYGDQAELYLKKAPTYVPGHGINASNKKGGIGGGNKQMPFDKFLLRKLQHIENCQKKHPKLSFLNCFGTSPIHELIYFWNGYNRMNETELKLTLTLLGYSGAVNSDYSANNNEQNFAKFEENEDEAMIRYLFQSITLRSLNRLSEGVSLLDSHVISKFVTQDSPNMPFKFIKMTYSPYLYPTALYERSMFVWLLRTSKKSANLREAIEESKSWLKKSEMVGDGDYELSNRTGMKIKAAGDRLDQFKTQI.

2 disordered regions span residues 207–238 and 287–335; these read SLQH…SASL and SVAS…EFSD. Residues 210–219 show a composition bias toward polar residues; it reads HEGNSANVST. Composition is skewed to low complexity over residues 224 to 237 and 287 to 297; these read GYSN…SSAS and SVASAVNSDSG. A compositionally biased stretch (polar residues) spans 304 to 313; the sequence is RATTLSQNAK. Over residues 322–335 the composition is skewed to acidic residues; it reads ADDEFDDEDDEFSD.

The protein belongs to the IML2 family. As to quaternary structure, interacts with lipid droplet proteins.

The protein resides in the cytoplasm. Its subcellular location is the nucleus. Its function is as follows. Inclusion body (IB) resident protein that interacts strongly with lipid droplet (LD) proteins. Involved in LD-mediated IB clearing after protein folding stress, probably by enabling access to the IBs of an LD-stored soluble sterol derivative that acts as a chaperone in inclusion clearing. This Debaryomyces hansenii (strain ATCC 36239 / CBS 767 / BCRC 21394 / JCM 1990 / NBRC 0083 / IGC 2968) (Yeast) protein is Inclusion body clearance protein IML2 (IML2).